Here is a 427-residue protein sequence, read N- to C-terminus: V-type proton ATPase subunit C 2 (427 aa).

The interval 298–320 is disordered; the sequence is PLGNPARPAAGQTDRDRESEGEG.

Belongs to the V-ATPase C subunit family. As to quaternary structure, V-ATPase is a heteromultimeric enzyme made up of two complexes: the ATP-hydrolytic V1 complex and the proton translocation V0 complex. The V1 complex consists of three catalytic AB heterodimers that form a heterohexamer, three peripheral stalks each consisting of EG heterodimers, one central rotor including subunits D and F, and the regulatory subunits C and H. The proton translocation complex V0 consists of the proton transport subunit a, a ring of proteolipid subunits c9c'', rotary subunit d, subunits e and f, and the accessory subunits ATP6AP1/Ac45 and ATP6AP2/PRR. In terms of tissue distribution, predominantly expressed in the lung and kidney. Isoform 1 is lung-specific while isoform 3 is a kidney-specific isoform. Isoform 1 is localized in the lamellar bodies of type II alveolar cells. Isoform 2 is strongly expressed in the cortical and medulla collecting ducts and is found in the plasma membranes of renal alpha and beta intercalated cells.

Its function is as follows. Subunit of the V1 complex of vacuolar(H+)-ATPase (V-ATPase), a multisubunit enzyme composed of a peripheral complex (V1) that hydrolyzes ATP and a membrane integral complex (V0) that translocates protons. V-ATPase is responsible for acidifying and maintaining the pH of intracellular compartments and in some cell types, is targeted to the plasma membrane, where it is responsible for acidifying the extracellular environment. Subunit C is necessary for the assembly of the catalytic sector of the enzyme and is likely to have a specific function in its catalytic activity. The chain is V-type proton ATPase subunit C 2 (Atp6v1c2) from Mus musculus (Mouse).